Reading from the N-terminus, the 109-residue chain is Large ribosomal subunit protein uL22 (109 aa).

The protein belongs to the universal ribosomal protein uL22 family. In terms of assembly, part of the 50S ribosomal subunit.

In terms of biological role, this protein binds specifically to 23S rRNA; its binding is stimulated by other ribosomal proteins, e.g. L4, L17, and L20. It is important during the early stages of 50S assembly. It makes multiple contacts with different domains of the 23S rRNA in the assembled 50S subunit and ribosome. The globular domain of the protein is located near the polypeptide exit tunnel on the outside of the subunit, while an extended beta-hairpin is found that lines the wall of the exit tunnel in the center of the 70S ribosome. This chain is Large ribosomal subunit protein uL22, found in Leptothrix cholodnii (strain ATCC 51168 / LMG 8142 / SP-6) (Leptothrix discophora (strain SP-6)).